The primary structure comprises 100 residues: uncharacterized protein (100 aa).

The chain crosses the membrane as a helical span at residues 28-45 (VFLVFYIITMVKIYIFLI).

It is found in the membrane. This is an uncharacterized protein from Saccharomyces cerevisiae (strain ATCC 204508 / S288c) (Baker's yeast).